Reading from the N-terminus, the 163-residue chain is Small ribosomal subunit protein uS9 (163 aa).

Residues 1–41 (MAENTNDSAVLETEEELTSYTTETNAGAGTGTSTIAPGYGT) are disordered. Residues 18–38 (TSYTTETNAGAGTGTSTIAPG) show a composition bias toward low complexity.

It belongs to the universal ribosomal protein uS9 family.

The sequence is that of Small ribosomal subunit protein uS9 from Bifidobacterium adolescentis (strain ATCC 15703 / DSM 20083 / NCTC 11814 / E194a).